A 686-amino-acid chain; its full sequence is Methionine--tRNA ligase (686 aa).

A 'HIGH' region motif is present at residues 15–25; it reads PYANGPIHLGH. The Zn(2+) site is built by Cys146, Cys149, Cys159, and Cys162. Residues 331–335 carry the 'KMSKS' region motif; that stretch reads KMSKS. Lys334 is an ATP binding site. Positions 584–686 constitute a tRNA-binding domain; the sequence is DFAKIDLRVA…AGVKAGSRVM (103 aa).

Belongs to the class-I aminoacyl-tRNA synthetase family. MetG type 1 subfamily. As to quaternary structure, homodimer. It depends on Zn(2+) as a cofactor.

The protein localises to the cytoplasm. It carries out the reaction tRNA(Met) + L-methionine + ATP = L-methionyl-tRNA(Met) + AMP + diphosphate. In terms of biological role, is required not only for elongation of protein synthesis but also for the initiation of all mRNA translation through initiator tRNA(fMet) aminoacylation. The protein is Methionine--tRNA ligase of Mannheimia succiniciproducens (strain KCTC 0769BP / MBEL55E).